Reading from the N-terminus, the 26-residue chain is Mitochondrial import receptor subunit TOM7-2 (26 aa).

Belongs to the Tom7 family. In terms of assembly, forms part of the preprotein translocase complex of the outer mitochondrial membrane (TOM complex).

Its subcellular location is the mitochondrion outer membrane. Its function is as follows. Seems to act as a modulator of the dynamics of the mitochondrial protein transport machinery. Seems to promote the dissociation of subunits of the outer membrane translocase. The polypeptide is Mitochondrial import receptor subunit TOM7-2 (TOM7-2) (Solanum tuberosum (Potato)).